Consider the following 247-residue polypeptide: Cementoblastoma-derived protein 1 (247 aa).

Residues 1–28 (MGTSSTDSQQAGHRRCSTSNTSAENLTC) show a composition bias toward polar residues. Disordered regions lie at residues 1-52 (MGTS…AGQP) and 147-183 (EENS…EKVK).

Phosphorylated. Post-translationally, N-glycosylated. In terms of tissue distribution, expressed by cementoblasts, a subpopulation of periodontal ligament cells and cells located around vessels in periodontium (at protein level).

Its subcellular location is the cytoplasm. It localises to the nucleus. In terms of biological role, may play a role in development of the periodontium which surrounds and supports the teeth by promoting the differentiation of multi-potent cells from the periodontal ligament into cementoblasts to form the cementum. Binds hydroxyapatite and may promote the biomineralization of the cementum. Also promotes cell proliferation. The sequence is that of Cementoblastoma-derived protein 1 from Homo sapiens (Human).